A 392-amino-acid chain; its full sequence is Glyceraldehyde-3-phosphate dehydrogenase A, chloroplastic (392 aa).

Residues 1–56 constitute a chloroplast transit peptide; sequence NSSLQVSNKGFSEFSGLRTSSAIPFGRKTNDDLLSVVAFQTSVIGGGNSKRGVVEA. Residues 67–68, aspartate 91, and arginine 136 contribute to the NADP(+) site; that span reads RI. Residues 208 to 210, threonine 239, arginine 254, 267 to 268, and arginine 290 contribute to the D-glyceraldehyde 3-phosphate site; these read SCT and TG. Cysteine 209 (nucleophile) is an active-site residue. Asparagine 372 is a binding site for NADP(+).

The protein belongs to the glyceraldehyde-3-phosphate dehydrogenase family. In terms of assembly, tetramer of either four A chains (GAPDH 2) or two A and two B chains (GAPDH 1).

The protein localises to the plastid. It localises to the chloroplast. The catalysed reaction is D-glyceraldehyde 3-phosphate + phosphate + NADP(+) = (2R)-3-phospho-glyceroyl phosphate + NADPH + H(+). It functions in the pathway carbohydrate biosynthesis; Calvin cycle. The chain is Glyceraldehyde-3-phosphate dehydrogenase A, chloroplastic (GAPA) from Nicotiana tabacum (Common tobacco).